The chain runs to 264 residues: uncharacterized protein (264 aa).

An N-terminal signal peptide occupies residues 1 to 22 (MKRKLTICLLIALIFYNGNAKA). Residues 227–247 (LLWVIITTGSIIITALTYVGY) form a helical membrane-spanning segment.

The protein resides in the membrane. This is an uncharacterized protein from Bacillus subtilis (strain 168).